The sequence spans 275 residues: tRNA pseudouridine synthase A (275 aa).

The Nucleophile role is filled by Asp-56. Substrate is bound at residue Tyr-110.

The protein belongs to the tRNA pseudouridine synthase TruA family.

It catalyses the reaction uridine(38/39/40) in tRNA = pseudouridine(38/39/40) in tRNA. In terms of biological role, formation of pseudouridine at positions 38, 39 and 40 in the anticodon stem and loop of transfer RNAs. The polypeptide is tRNA pseudouridine synthase A (Haloarcula marismortui (strain ATCC 43049 / DSM 3752 / JCM 8966 / VKM B-1809) (Halobacterium marismortui)).